The following is a 447-amino-acid chain: Tubulin beta-1 chain (447 aa).

GTP contacts are provided by Gln11, Glu69, Ser138, Gly142, Thr143, Gly144, Asn204, and Asn226. Glu69 provides a ligand contact to Mg(2+). Residues 428–447 (ATADEDAEFDEEQEQEIEDN) are disordered. Residues 429–447 (TADEDAEFDEEQEQEIEDN) are compositionally biased toward acidic residues.

It belongs to the tubulin family. In terms of assembly, dimer of alpha and beta chains. A typical microtubule is a hollow water-filled tube with an outer diameter of 25 nm and an inner diameter of 15 nM. Alpha-beta heterodimers associate head-to-tail to form protofilaments running lengthwise along the microtubule wall with the beta-tubulin subunit facing the microtubule plus end conferring a structural polarity. Microtubules usually have 13 protofilaments but different protofilament numbers can be found in some organisms and specialized cells. It depends on Mg(2+) as a cofactor.

It is found in the cytoplasm. Its subcellular location is the cytoskeleton. Functionally, tubulin is the major constituent of microtubules, a cylinder consisting of laterally associated linear protofilaments composed of alpha- and beta-tubulin heterodimers. Microtubules grow by the addition of GTP-tubulin dimers to the microtubule end, where a stabilizing cap forms. Below the cap, tubulin dimers are in GDP-bound state, owing to GTPase activity of alpha-tubulin. In Manduca sexta (Tobacco hawkmoth), this protein is Tubulin beta-1 chain.